The primary structure comprises 705 residues: Ribosomal RNA large subunit methyltransferase K/L (705 aa).

The THUMP domain maps to 43-154 (VVYRCCLWSR…GEKGILGFDL (112 aa)).

Belongs to the methyltransferase superfamily. RlmKL family.

It is found in the cytoplasm. The catalysed reaction is guanosine(2445) in 23S rRNA + S-adenosyl-L-methionine = N(2)-methylguanosine(2445) in 23S rRNA + S-adenosyl-L-homocysteine + H(+). It catalyses the reaction guanosine(2069) in 23S rRNA + S-adenosyl-L-methionine = N(2)-methylguanosine(2069) in 23S rRNA + S-adenosyl-L-homocysteine + H(+). In terms of biological role, specifically methylates the guanine in position 2445 (m2G2445) and the guanine in position 2069 (m7G2069) of 23S rRNA. This is Ribosomal RNA large subunit methyltransferase K/L from Aliivibrio fischeri (strain MJ11) (Vibrio fischeri).